The sequence spans 418 residues: Glutamyl-tRNA(Gln) amidotransferase subunit D (418 aa).

Positions Pro-81–Ser-407 constitute an Asparaginase/glutaminase domain. Residues Thr-91, Thr-166, Asp-167, and Lys-243 contribute to the active site.

It belongs to the asparaginase 1 family. GatD subfamily. Heterodimer of GatD and GatE.

The enzyme catalyses L-glutamyl-tRNA(Gln) + L-glutamine + ATP + H2O = L-glutaminyl-tRNA(Gln) + L-glutamate + ADP + phosphate + H(+). Functionally, allows the formation of correctly charged Gln-tRNA(Gln) through the transamidation of misacylated Glu-tRNA(Gln) in organisms which lack glutaminyl-tRNA synthetase. The reaction takes place in the presence of glutamine and ATP through an activated gamma-phospho-Glu-tRNA(Gln). The GatDE system is specific for glutamate and does not act on aspartate. The chain is Glutamyl-tRNA(Gln) amidotransferase subunit D from Archaeoglobus fulgidus (strain ATCC 49558 / DSM 4304 / JCM 9628 / NBRC 100126 / VC-16).